We begin with the raw amino-acid sequence, 102 residues long: YcgL domain-containing protein MS1047 (102 aa).

A YcgL domain is found at 1 to 85; that stretch reads MLCAIYKSKK…KQESLFEQFK (85 aa).

In Mannheimia succiniciproducens (strain KCTC 0769BP / MBEL55E), this protein is YcgL domain-containing protein MS1047.